The following is a 1331-amino-acid chain: ABC multidrug transporter MDR2 (1331 aa).

Composition is skewed to basic and acidic residues over residues 1-20 (MVEV…KQEN) and 31-41 (SDKEKVAKKGN). The segment at 1–51 (MVEVSEKPNTQDDGVSKQENRNPASSSSSTSDKEKVAKKGNSDATKSSTPE) is disordered. Transmembrane regions (helical) follow at residues 93–113 (MIFL…LPLF), 147–167 (YFVY…VGFI), 219–239 (KVGL…IGYV), and 242–262 (WKLA…MGGI). Residues 97 to 387 (AIVSLASIAA…VAPNTQAFAS (291 aa)) form the ABC transmembrane type-1 1 domain. An N-linked (GlcNAc...) asparagine glycan is attached at Asn293. 2 helical membrane passes run 325–345 (LGIM…LGFW) and 358–378 (LSAI…IGNV). The 246-residue stretch at 422–667 (IEFRGIKHIY…KGTYLQLVEA (246 aa)) folds into the ABC transporter 1 domain. ATP is bound at residue 457–464 (GPSGSGKS). Asn529 carries an N-linked (GlcNAc...) asparagine glycan. 2 consecutive transmembrane segments (helical) span residues 762 to 782 (LCGF…SVFF) and 810 to 830 (FLML…IFAI). An ABC transmembrane type-1 2 domain is found at 764–1051 (GFFFAVLSGA…VFSFSPDMGK (288 aa)). A glycan (N-linked (GlcNAc...) asparagine) is linked at Asn860. 4 helical membrane passes run 884-904 (LGTI…ALAF), 910-930 (LVCI…FWIL), 995-1015 (ASQS…GGLL), and 1025-1045 (FFLC…VFSF). Positions 1086–1324 (IEFRDVHFRY…KGRYYELVHM (239 aa)) constitute an ABC transporter 2 domain. N-linked (GlcNAc...) asparagine glycosylation is present at Asn1108. 1121-1128 (GPSGCGKS) is a binding site for ATP.

The protein belongs to the ABC transporter superfamily. ABCB family. Multidrug resistance exporter (TC 3.A.1.201) subfamily.

It is found in the cell membrane. The catalysed reaction is itraconazole(in) + ATP + H2O = itraconazole(out) + ADP + phosphate + H(+). Pleiotropic ABC efflux transporter that may be involved in the modulation susceptibility to a wide range of unrelated cytotoxic compounds, including terbinafine, 4-nitroquinoline N-oxide, and ethidium bromide. May play a role in pathogenicity. In Trichophyton interdigitale (strain MR816), this protein is ABC multidrug transporter MDR2.